Reading from the N-terminus, the 381-residue chain is Succinyl-diaminopimelate desuccinylase (381 aa).

His-68 lines the Zn(2+) pocket. Residue Asp-70 is part of the active site. Residue Asp-101 coordinates Zn(2+). Glu-135 acts as the Proton acceptor in catalysis. Zn(2+) contacts are provided by Glu-136, Glu-164, and His-350.

This sequence belongs to the peptidase M20A family. DapE subfamily. Homodimer. Requires Zn(2+) as cofactor. The cofactor is Co(2+).

It catalyses the reaction N-succinyl-(2S,6S)-2,6-diaminopimelate + H2O = (2S,6S)-2,6-diaminopimelate + succinate. It participates in amino-acid biosynthesis; L-lysine biosynthesis via DAP pathway; LL-2,6-diaminopimelate from (S)-tetrahydrodipicolinate (succinylase route): step 3/3. Catalyzes the hydrolysis of N-succinyl-L,L-diaminopimelic acid (SDAP), forming succinate and LL-2,6-diaminopimelate (DAP), an intermediate involved in the bacterial biosynthesis of lysine and meso-diaminopimelic acid, an essential component of bacterial cell walls. In Neisseria gonorrhoeae (strain ATCC 700825 / FA 1090), this protein is Succinyl-diaminopimelate desuccinylase.